The chain runs to 155 residues: Putative pre-16S rRNA nuclease (155 aa).

This sequence belongs to the YqgF nuclease family.

It localises to the cytoplasm. Could be a nuclease involved in processing of the 5'-end of pre-16S rRNA. The chain is Putative pre-16S rRNA nuclease from Paramagnetospirillum magneticum (strain ATCC 700264 / AMB-1) (Magnetospirillum magneticum).